Here is an 866-residue protein sequence, read N- to C-terminus: Protein aubergine (866 aa).

Methionine 1 is modified (N-acetylmethionine). Positions 1-61 are disordered; sequence MNLPPNPVIA…GGGDAQVGPS (61 aa). Arginine 11, arginine 13, arginine 15, and arginine 17 each carry symmetric dimethylarginine. The span at 46–56 shows a compositional bias: gly residues; that stretch reads ASGGNGGGGDA. In terms of domain architecture, PAZ spans 281 to 390; sequence TLYNILSDAI…IIPELARATG (110 aa). Positions 555–852 constitute a Piwi domain; that stretch reads IVMVVMRSPN…LAFLVAESIN (298 aa).

Belongs to the argonaute family. Piwi subfamily. As to quaternary structure, component of the ping-pong piRNA processing (4P) complex consisting of krimp, aub and AGO3. Interacts (via N-terminus when symmetrically dimethylated on arginine residues) with krimp (via tudor domain); this interaction requires methylation of at least one N-terminal arginie residue. Interacts with vas and AGO3. May form part of a piRNA processing complex consisting of tud, aub and AGO3. Interacts (when symmetrically dimethylated on arginine residues) with tud; methylation and/or interaction requires association with piRNA. Interacts (via N-terminus and when associated with piRNA) with csul/PRMT5; the interaction recruits the PRMT5 methylosome complex to modify N-terminal arginines by symmetrical dimethylation but involves residues other than the arginines to be modified. Forms a complex with smg, twin, AGO3, nanos mRNA and piRNAs that targets the nanos 3'-untranslated region, in early embryos. Interacts with nanos mRNA and rump (in an RNA-dependent manner). Interacts with papi and vret. Interacts with me31B. Post-translationally, symmetrical dimethylation of arginines (sDMA) on Arg-11, Arg-13 and/or Arg-15 by csul/PRMT5/DART5, is required for binding to tud, localization to the pole plasm and association with the correct piRNAs. SDMA on Arg-11, Arg-13, Arg-15 and/or Arg-17 is required for binding to krimp and stable recruitment to subregions of the nuage. Methylation state does not affect protein stability. SDMA plays an important role in ping-pong amplification of piRNAs and is essential for function in vivo. Methylation state functions as an indicator of its piRNA binding state. PiRNA binding promotes sDMA modification; piRNA binding induces a conformational change that exposes the N-terminal arginines, making them available to the methylosome complex. In terms of tissue distribution, expressed in ovary. In the germarium, found in germline stem and cyst cells. In egg chambers from stage 6, expressed both in nurse cells and oocytes. In embryos, accumulates in the pole cells, although low expression is detected throughout the entire embryo. In testis, expressed in germline stem cells, gonialblast and spermatogonia cells (at protein level). In the adult brain, expressed in the ellipsoid body, the mushroom body subdivision in the peduncle and the cell body layer. Expressed specifically in alpha'/beta' and gamma neurons.

It localises to the cytoplasm. The protein resides in the cytosol. The protein localises to the perinuclear region. It is found in the cytoplasmic ribonucleoprotein granule. In terms of biological role, component of the perinuclear meiotic nuage, a germline-specific subcellular membraneless ribonucleoprotein compartment involved in production of transposable element-repressing Piwi-interacting RNA (piRNA)-induced silencing complexes (piRISCs), which are essential for maintaining germline integrity during oogenesis; essential for the formation and/or structural integrity of nuage particles. Acts via the Piwi-interacting RNA (piRNA) metabolic process, which mediates the repression of transposable elements during meiosis by forming complexes composed of piRNAs and Piwi proteins and governs the methylation and subsequent repression of transposons. Directly binds piRNAs, a class of 24 to 30 nucleotide RNAs that are generated by a Dicer-independent mechanism and are primarily derived from transposons and other repeated sequence elements. Shows RNA cleavage or slicer activity; including aub-piRNA complexes from ovary and testis. When loaded with guide piRNAs recognizes and cleaves complementary RNAs to repress their expression and produce complementary piRNAs. Together with Piwi protein AGO3 recruited to subregions of the perinuclear nuage by krimp, which coordinates their activity in the ping-pong amplification step of secondary piRNA biogenesis. Krimp recruits piRNA bound aub and unbound AGO3, bringing them into close proximity to facilitate the loading onto AGO3 of freshly cut piRNAs generated by aub cleavage of target sequences; krimp recognizes the piRNA loading state of the Piwi proteins via symmetrically dimethylated arginine modification in their N-terminus. Important for asymmetric ping-pong amplification to bias production towards antisense piRNAs capable of silencing transposable elements. Required for the localization of mael and krimp to the meiotic nuage. In ovary, associates predominantly with antisense piRNAs that contain uridine at their 5' end. In testis, associates with Su(Ste) antisense piRNAs (most abundant class of piRNAs found in complex with aub in testes) and negatively regulates Ste expression, most likely by cleaving its transcripts. Also in testis, may repress translation of vas when associated with a piRNA derived from chromosome X, termed AT-chX-1, whose sequence shows strong complementarity to vas mRNA. Involved in repression of long interspersed nuclear elements (LINEs) including HeT-A, I-element and TART LINEs. Repression of specialized telomeric retroelements HeT-A and TART is involved in telomere regulation; Drosophila telomeres being maintained by transposition of specialized telomeric retroelements. Also involved in telomeric trans-silencing, a repression mechanism by which a transposon or a transgene inserted in subtelomeric heterochromatin has the capacity to repress in trans, in the female germline, a homologous transposon, or transgene located in euchromatin. Involved in the suppression of meiotic drive of sex chromosomes and autosomes. Involved in transposon silencing in the adult brain. Required for dorsal-ventral as well as anterior-posterior patterning of the egg. Required during oogenesis for primordial germ cell formation and activation of RNA interference. During early oogenesis, required for osk mRNA silencing and polarization of the microtubule cytoskeleton. During mid-oogenesis, required for osk mRNA localization to the posterior pole and efficient translation of osk and grk. During embryogenesis, required for posterior localization of nanos (nos) mRNA, independently of osk, and pole cell formation. Forms a complex with smg, twin, AGO3 and specific piRNAs that targets nanos mRNA (and probably other maternal mRNAS) for deadenylation promoting its decay during early embryogenesis. This chain is Protein aubergine, found in Drosophila melanogaster (Fruit fly).